A 53-amino-acid chain; its full sequence is Large ribosomal subunit protein bL32c (53 aa).

It belongs to the bacterial ribosomal protein bL32 family.

The protein localises to the plastid. The protein resides in the chloroplast. In Phaseolus vulgaris (Kidney bean), this protein is Large ribosomal subunit protein bL32c.